A 38-amino-acid polypeptide reads, in one-letter code: Photosystem I reaction center subunit IX (38 aa).

The chain crosses the membrane as a helical span at residues 4-24; the sequence is FLTTAPVVAAIWFTLTAGILI.

This sequence belongs to the PsaJ family.

It is found in the cellular thylakoid membrane. Its function is as follows. May help in the organization of the PsaE and PsaF subunits. The protein is Photosystem I reaction center subunit IX of Parasynechococcus marenigrum (strain WH8102).